The primary structure comprises 211 residues: Large ribosomal subunit protein bL25 (211 aa).

The tract at residues 188-211 (APKAAKVSTDDEAAAPAEEAPAAE) is disordered. Over residues 201–211 (AAPAEEAPAAE) the composition is skewed to low complexity.

It belongs to the bacterial ribosomal protein bL25 family. CTC subfamily. In terms of assembly, part of the 50S ribosomal subunit; part of the 5S rRNA/L5/L18/L25 subcomplex. Contacts the 5S rRNA. Binds to the 5S rRNA independently of L5 and L18.

Its function is as follows. This is one of the proteins that binds to the 5S RNA in the ribosome where it forms part of the central protuberance. This chain is Large ribosomal subunit protein bL25, found in Colwellia psychrerythraea (strain 34H / ATCC BAA-681) (Vibrio psychroerythus).